A 154-amino-acid polypeptide reads, in one-letter code: Myoglobin (154 aa).

The Globin domain maps to 2 to 148 (GLSDGEWQLV…FRKDIAAKYK (147 aa)). The residue at position 4 (serine 4) is a Phosphoserine. Histidine 65 provides a ligand contact to nitrite. Histidine 65 provides a ligand contact to O2. Residue threonine 68 is modified to Phosphothreonine. Histidine 94 is a binding site for heme b.

Belongs to the globin family. In terms of assembly, monomeric.

Its subcellular location is the cytoplasm. It is found in the sarcoplasm. The enzyme catalyses Fe(III)-heme b-[protein] + nitric oxide + H2O = Fe(II)-heme b-[protein] + nitrite + 2 H(+). It carries out the reaction H2O2 + AH2 = A + 2 H2O. Functionally, monomeric heme protein which primary function is to store oxygen and facilitate its diffusion within muscle tissues. Reversibly binds oxygen through a pentacoordinated heme iron and enables its timely and efficient release as needed during periods of heightened demand. Depending on the oxidative conditions of tissues and cells, and in addition to its ability to bind oxygen, it also has a nitrite reductase activity whereby it regulates the production of bioactive nitric oxide. Under stress conditions, like hypoxia and anoxia, it also protects cells against reactive oxygen species thanks to its pseudoperoxidase activity. In Delphinus delphis (Short-beaked common dolphin), this protein is Myoglobin (MB).